A 476-amino-acid polypeptide reads, in one-letter code: Bifunctional protein HldE (476 aa).

The ribokinase stretch occupies residues 1-319 (MAQYSAQFPH…NAIHGRTVSG (319 aa)). 195 to 198 (NMSE) serves as a coordination point for ATP. The active site involves D264. Residues 344–476 (MTNGCFDILH…VIKKIRDLKD (133 aa)) form a cytidylyltransferase region.

In the N-terminal section; belongs to the carbohydrate kinase PfkB family. The protein in the C-terminal section; belongs to the cytidylyltransferase family. As to quaternary structure, homodimer.

The catalysed reaction is D-glycero-beta-D-manno-heptose 7-phosphate + ATP = D-glycero-beta-D-manno-heptose 1,7-bisphosphate + ADP + H(+). It catalyses the reaction D-glycero-beta-D-manno-heptose 1-phosphate + ATP + H(+) = ADP-D-glycero-beta-D-manno-heptose + diphosphate. It functions in the pathway nucleotide-sugar biosynthesis; ADP-L-glycero-beta-D-manno-heptose biosynthesis; ADP-L-glycero-beta-D-manno-heptose from D-glycero-beta-D-manno-heptose 7-phosphate: step 1/4. The protein operates within nucleotide-sugar biosynthesis; ADP-L-glycero-beta-D-manno-heptose biosynthesis; ADP-L-glycero-beta-D-manno-heptose from D-glycero-beta-D-manno-heptose 7-phosphate: step 3/4. In terms of biological role, catalyzes the phosphorylation of D-glycero-D-manno-heptose 7-phosphate at the C-1 position to selectively form D-glycero-beta-D-manno-heptose-1,7-bisphosphate. Functionally, catalyzes the ADP transfer from ATP to D-glycero-beta-D-manno-heptose 1-phosphate, yielding ADP-D-glycero-beta-D-manno-heptose. This Actinobacillus succinogenes (strain ATCC 55618 / DSM 22257 / CCUG 43843 / 130Z) protein is Bifunctional protein HldE.